Here is a 208-residue protein sequence, read N- to C-terminus: Small ribosomal subunit protein uS3 (208 aa).

Residues 38–106 (IRDYIKARLY…EILIDIQEVR (69 aa)) enclose the KH type-2 domain.

This sequence belongs to the universal ribosomal protein uS3 family. As to quaternary structure, part of the 30S ribosomal subunit. Forms a tight complex with proteins S10 and S14.

Binds the lower part of the 30S subunit head. Binds mRNA in the 70S ribosome, positioning it for translation. This chain is Small ribosomal subunit protein uS3, found in Syntrophobacter fumaroxidans (strain DSM 10017 / MPOB).